Reading from the N-terminus, the 344-residue chain is tRNA N6-adenosine threonylcarbamoyltransferase (344 aa).

His-116 and His-120 together coordinate Fe cation. Substrate contacts are provided by residues 138 to 142, Asp-171, Gly-184, Asp-188, and Asn-277; that span reads LVSGG. Asp-307 serves as a coordination point for Fe cation.

The protein belongs to the KAE1 / TsaD family. The cofactor is Fe(2+).

Its subcellular location is the cytoplasm. It carries out the reaction L-threonylcarbamoyladenylate + adenosine(37) in tRNA = N(6)-L-threonylcarbamoyladenosine(37) in tRNA + AMP + H(+). In terms of biological role, required for the formation of a threonylcarbamoyl group on adenosine at position 37 (t(6)A37) in tRNAs that read codons beginning with adenine. Is involved in the transfer of the threonylcarbamoyl moiety of threonylcarbamoyl-AMP (TC-AMP) to the N6 group of A37, together with TsaE and TsaB. TsaD likely plays a direct catalytic role in this reaction. In Latilactobacillus sakei subsp. sakei (strain 23K) (Lactobacillus sakei subsp. sakei), this protein is tRNA N6-adenosine threonylcarbamoyltransferase.